We begin with the raw amino-acid sequence, 231 residues long: Small ribosomal subunit protein bS18c (231 aa).

Disordered stretches follow at residues 1–31 (MEKS…PIES) and 95–231 (QKEE…TRKK). A compositionally biased stretch (basic residues) spans 9 to 26 (IKKKRPFRKKKRSFRKRR). Composition is skewed to basic and acidic residues over residues 95–151 (QKEE…EFQR), 159–169 (TNEKQTNEKQT), and 212–231 (TNEK…TRKK).

This sequence belongs to the bacterial ribosomal protein bS18 family. In terms of assembly, part of the 30S ribosomal subunit.

It is found in the plastid. It localises to the chloroplast. This is Small ribosomal subunit protein bS18c from Jasminum nudiflorum (Winter jasmine).